A 287-amino-acid chain; its full sequence is Leukocyte-associated immunoglobulin-like receptor 1 (287 aa).

The signal sequence occupies residues 1–21 (MSPHPTALLGLVLCLAQTIHT). Residues 22–165 (QEEDLPRPSI…SQGLKAEHLY (144 aa)) lie on the Extracellular side of the membrane. In terms of domain architecture, Ig-like C2-type spans 29–117 (PSISAEPGTV…KWSEQSDYLE (89 aa)). The cysteines at positions 49 and 101 are disulfide-linked. The N-linked (GlcNAc...) asparagine glycan is linked to Asn69. The interval 121–155 (KESSGGPDSPDTEPGSSAGPTQRPSDNSHNEHAPA) is disordered. The segment covering 134–145 (PGSSAGPTQRPS) has biased composition (polar residues). Residues 166 to 186 (ILIGVSVVFLFCLLLLVLFCL) traverse the membrane as a helical segment. The Cytoplasmic portion of the chain corresponds to 187–287 (HRQNQIKQGP…SITYAAVARH (101 aa)). The tract at residues 192 to 211 (IKQGPPRSKDEEQKPQQRPD) is disordered. Basic and acidic residues predominate over residues 198-208 (RSKDEEQKPQQ). 2 consecutive short sequence motifs (ITIM motif) follow at residues 249-254 (VTYAQL) and 279-284 (ITYAAV). A phosphotyrosine mark is found at Tyr251 and Tyr281.

In terms of assembly, interacts with SH2 domains of tyrosine-protein phosphatases PTPN6 and PTPN11. The interaction with PTPN6 is constitutive. Interacts with the SH2 domain of CSK. Binds with high affinity to extracellular matrix collagens, the interaction is functionally important. Phosphorylation at Tyr-251 and Tyr-281 activates it. May be phosphorylated by LCK. In terms of processing, N-glycosylated. As to expression, expressed on the majority of peripheral mononuclear cells, including natural killer (NK) cells, T-cells, B-cells, monocytes, and dendritic cells. Highly expressed in naive T-cells and B-cells but no expression on germinal center B-cells. Abnormally low expression in naive B-cells from HIV-1 infected patients. Very low expression in NK cells from a patient with chronic active Epstein-Barr virus infection.

It localises to the cell membrane. Its function is as follows. Functions as an inhibitory receptor that plays a constitutive negative regulatory role on cytolytic function of natural killer (NK) cells, B-cells and T-cells. Activation by Tyr phosphorylation results in recruitment and activation of the phosphatases PTPN6 and PTPN11. It also reduces the increase of intracellular calcium evoked by B-cell receptor ligation. May also play its inhibitory role independently of SH2-containing phosphatases. Modulates cytokine production in CD4+ T-cells, down-regulating IL2 and IFNG production while inducing secretion of transforming growth factor beta. Also down-regulates IgG and IgE production in B-cells as well as IL8, IL10 and TNF secretion. Inhibits proliferation and induces apoptosis in myeloid leukemia cell lines as well as prevents nuclear translocation of NF-kappa-B p65 subunit/RELA and phosphorylation of I-kappa-B alpha/CHUK in these cells. Inhibits the differentiation of peripheral blood precursors towards dendritic cells. The protein is Leukocyte-associated immunoglobulin-like receptor 1 (LAIR1) of Homo sapiens (Human).